We begin with the raw amino-acid sequence, 371 residues long: MSL complex subunit 3B (371 aa).

2 disordered regions span residues 1–44 (MATL…READ) and 160–229 (EERA…SPQA). A compositionally biased stretch (basic and acidic residues) spans 8 to 44 (PKDDGEGKDEGGSDRGDGDPKPKGKKEVEAHTRREAD). The 324-residue stretch at 44–367 (DERAVRIPIP…CEAHYSSKNP (324 aa)) folds into the MRG domain. Residues 206–216 (APRRSTRHSTH) show a composition bias toward basic residues.

The protein localises to the nucleus. Its function is as follows. Probable non-catalytic component of the MSL histone acetyltransferase complex, a multiprotein complex that mediates the majority of histone H4 acetylation at 'Lys-16' (H4K16ac), an epigenetic mark that prevents chromatin compaction. This is MSL complex subunit 3B from Rattus norvegicus (Rat).